The sequence spans 1127 residues: E3 ubiquitin-protein ligase TRIM33 (1127 aa).

The segment covering 1–18 (MAENKGGGEAESGGGGSG) has biased composition (gly residues). The interval 1–118 (MAENKGGGEA…PSAGPPPGPP (118 aa)) is disordered. Residues 1–147 (MAENKGGGEA…AEPKLLPCLH (147 aa)) are necessary for E3 ubiquitin-protein ligase activity and repression of SMAD4 signaling and transcriptional repression. Positions 19–37 (SAPVTAGAAGPAAQEAEPP) are enriched in low complexity. The span at 52 to 64 (RAGAEGGAAGPDD) shows a compositional bias: gly residues. Over residues 65–97 (GGVAAASSGSAQAASSPAASVGTGVAGGAVSTP) the composition is skewed to low complexity. Residues 98-118 (APAPASAPAPGPSAGPPPGPP) show a composition bias toward pro residues. The segment at 125-154 (CAVCQQSLQSRREAEPKLLPCLHSFCLRCL) adopts an RING-type zinc-finger fold. 2 B box-type zinc fingers span residues 212–259 (KSEQ…IRKK) and 271–312 (QRPV…YQFL). Residues C217, C220, C241, H245, C276, H279, C299, and H304 each coordinate Zn(2+). The tract at residues 299 to 401 (CQLLEHKEHR…QMKLLQQQND (103 aa)) is necessary for oligomerization. Residues 299-401 (CQLLEHKEHR…QMKLLQQQND (103 aa)) adopt a coiled-coil conformation. Glycyl lysine isopeptide (Lys-Gly) (interchain with G-Cter in SUMO2) cross-links involve residues K329, K334, K481, and K504. R515 carries the asymmetric dimethylarginine; alternate modification. R515 carries the post-translational modification Omega-N-methylarginine; alternate. A Glycyl lysine isopeptide (Lys-Gly) (interchain with G-Cter in SUMO2) cross-link involves residue K527. R535 is modified (omega-N-methylarginine). A disordered region spans residues 536–563 (MQQPPAPVPTTTTTTQQHPRQAAPQMLQ). R577 carries the post-translational modification Asymmetric dimethylarginine. Asymmetric dimethylarginine; alternate is present on R591. Omega-N-methylarginine; alternate is present on R591. R598 and R604 each carry asymmetric dimethylarginine. 3 disordered regions span residues 608-629 (PQYS…HAGP), 673-692 (NPEN…EDAG), and 703-818 (YISG…TPPL). The segment covering 723–759 (PSALSPGSSGLSNSHTPVRPPSTSSTGSRGSCGSSGR) has biased composition (low complexity). N6-acetyllysine; alternate occurs at positions 763 and 769. Residues K763 and K769 each participate in a glycyl lysine isopeptide (Lys-Gly) (interchain with G-Cter in SUMO2); alternate cross-link. K774 participates in a covalent cross-link: Glycyl lysine isopeptide (Lys-Gly) (interchain with G-Cter in SUMO2). Residues K776 and K793 each participate in a glycyl lysine isopeptide (Lys-Gly) (interchain with G-Cter in SUMO2); alternate cross-link. Glycyl lysine isopeptide (Lys-Gly) (interchain with G-Cter in SUMO1); alternate cross-links involve residues K776 and K793. K793 is subject to N6-acetyllysine; alternate. The segment covering 793 to 802 (KQEKTEDGRR) has biased composition (basic and acidic residues). K796 is covalently cross-linked (Glycyl lysine isopeptide (Lys-Gly) (interchain with G-Cter in SUMO2)). Phosphoserine is present on S803. Low complexity predominate over residues 807–818 (LSSPESSLTPPL). Phosphothreonine is present on T815. K861 participates in a covalent cross-link: Glycyl lysine isopeptide (Lys-Gly) (interchain with G-Cter in SUMO2). Position 862 is a phosphoserine (S862). Residues 887-934 (EDWCAVCQNGGDLLCCEKCPKVFHLTCHVPTLLSFPSGDWICTFCRDI) form a PHD-type zinc finger. Position 951 is an N6-acetyllysine (K951). Residue K953 is modified to N6-acetyllysine; alternate. K953 participates in a covalent cross-link: Glycyl lysine isopeptide (Lys-Gly) (interchain with G-Cter in SUMO2); alternate. A Bromo domain is found at 957–1080 (GLSPVDQRKC…LYFEDKLTEI (124 aa)). Residues K1007 and K1043 each participate in a glycyl lysine isopeptide (Lys-Gly) (interchain with G-Cter in SUMO2) cross-link. T1051 carries the phosphothreonine modification. K1057 is covalently cross-linked (Glycyl lysine isopeptide (Lys-Gly) (interchain with G-Cter in SUMO2)). Residues 1088–1127 (PLPEFEQEEDDGEVTEDSDEDFIQPRRKRLKSDERPVHIK) are disordered. Acidic residues predominate over residues 1092–1109 (FEQEEDDGEVTEDSDEDF). The residue at position 1102 (T1102) is a Phosphothreonine. S1105 bears the Phosphoserine mark. K1118 is covalently cross-linked (Glycyl lysine isopeptide (Lys-Gly) (interchain with G-Cter in SUMO2)). The segment covering 1118–1127 (KSDERPVHIK) has biased composition (basic and acidic residues). Position 1119 is a phosphoserine (S1119).

This sequence belongs to the TRIM/RBCC family. Homooligomer and heterooligomer with TRIM24 and TRIM28 family members. Interacts with SMAD4 in unstimulated cells. Found in a complex with SMAD2 and SMAD3 upon addition of TGF-beta. Interacts with SMAD2 and SMAD3. Interacts with SMAD4 under basal and induced conditions and, upon TGF-beta signaling, with activated SMAD2. Forms a ternary complex with SMAD4 and SMAD2 upon TGF-beta signaling. In terms of processing, sumoylated with SUMO1. Expressed in stem cells at the bottom of the crypts of the colon (at protein level). Expressed in colon adenomas and adenocarcinomas (at protein level). Expressed in brain, lung, liver, spleen, thymus, prostate, kidney, testis, heart, placenta, pancreas, small intestine, ovary, colon, skeletal muscle and hematopoietic progenitors.

It is found in the nucleus. The enzyme catalyses S-ubiquitinyl-[E2 ubiquitin-conjugating enzyme]-L-cysteine + [acceptor protein]-L-lysine = [E2 ubiquitin-conjugating enzyme]-L-cysteine + N(6)-ubiquitinyl-[acceptor protein]-L-lysine.. It participates in protein modification; protein ubiquitination. Acts as an E3 ubiquitin-protein ligase. Promotes SMAD4 ubiquitination, nuclear exclusion and degradation via the ubiquitin proteasome pathway. According to PubMed:16751102, does not promote a decrease in the level of endogenous SMAD4. May act as a transcriptional repressor. Inhibits the transcriptional response to TGF-beta/BMP signaling cascade. Plays a role in the control of cell proliferation. Its association with SMAD2 and SMAD3 stimulates erythroid differentiation of hematopoietic stem/progenitor. Monoubiquitinates SMAD4 and acts as an inhibitor of SMAD4-dependent TGF-beta/BMP signaling cascade (Monoubiquitination of SMAD4 hampers its ability to form a stable complex with activated SMAD2/3 resulting in inhibition of TGF-beta/BMP signaling cascade). This chain is E3 ubiquitin-protein ligase TRIM33 (TRIM33), found in Homo sapiens (Human).